A 347-amino-acid polypeptide reads, in one-letter code: 3-isopropylmalate dehydrogenase (347 aa).

Residue 76–87 (GPKWTDPNNRPE) participates in NAD(+) binding. Substrate-binding residues include arginine 94, arginine 104, arginine 132, and aspartate 217. Mg(2+) contacts are provided by aspartate 217, aspartate 241, and aspartate 245. 275–287 (GSAPDIANEDKAN) lines the NAD(+) pocket.

Belongs to the isocitrate and isopropylmalate dehydrogenases family. LeuB type 1 subfamily. In terms of assembly, homodimer. Requires Mg(2+) as cofactor. Mn(2+) is required as a cofactor.

It localises to the cytoplasm. The catalysed reaction is (2R,3S)-3-isopropylmalate + NAD(+) = 4-methyl-2-oxopentanoate + CO2 + NADH. It functions in the pathway amino-acid biosynthesis; L-leucine biosynthesis; L-leucine from 3-methyl-2-oxobutanoate: step 3/4. Functionally, catalyzes the oxidation of 3-carboxy-2-hydroxy-4-methylpentanoate (3-isopropylmalate) to 3-carboxy-4-methyl-2-oxopentanoate. The product decarboxylates to 4-methyl-2 oxopentanoate. This Staphylococcus epidermidis (strain ATCC 35984 / DSM 28319 / BCRC 17069 / CCUG 31568 / BM 3577 / RP62A) protein is 3-isopropylmalate dehydrogenase.